Reading from the N-terminus, the 345-residue chain is Histidinol-phosphate aminotransferase (345 aa).

N6-(pyridoxal phosphate)lysine is present on K206.

The protein belongs to the class-II pyridoxal-phosphate-dependent aminotransferase family. Histidinol-phosphate aminotransferase subfamily. In terms of assembly, homodimer. The cofactor is pyridoxal 5'-phosphate.

It catalyses the reaction L-histidinol phosphate + 2-oxoglutarate = 3-(imidazol-4-yl)-2-oxopropyl phosphate + L-glutamate. It functions in the pathway amino-acid biosynthesis; L-histidine biosynthesis; L-histidine from 5-phospho-alpha-D-ribose 1-diphosphate: step 7/9. The chain is Histidinol-phosphate aminotransferase from Bacteroides fragilis (strain ATCC 25285 / DSM 2151 / CCUG 4856 / JCM 11019 / LMG 10263 / NCTC 9343 / Onslow / VPI 2553 / EN-2).